The following is a 343-amino-acid chain: Sulfate/thiosulfate import ATP-binding protein CysA (343 aa).

The 231-residue stretch at I3–M233 folds into the ABC transporter domain. G35–S42 contacts ATP.

Belongs to the ABC transporter superfamily. Sulfate/tungstate importer (TC 3.A.1.6) family.

The protein resides in the plastid. It localises to the chloroplast. It carries out the reaction sulfate(out) + ATP + H2O = sulfate(in) + ADP + phosphate + H(+). The enzyme catalyses thiosulfate(out) + ATP + H2O = thiosulfate(in) + ADP + phosphate + H(+). Its function is as follows. Part of the ABC transporter complex involved in sulfate/thiosulfate import. Responsible for energy coupling to the transport system. In Nephroselmis olivacea (Green alga), this protein is Sulfate/thiosulfate import ATP-binding protein CysA.